The sequence spans 409 residues: Tryptophan synthase beta chain (409 aa).

Lysine 98 is subject to N6-(pyridoxal phosphate)lysine.

The protein belongs to the TrpB family. Tetramer of two alpha and two beta chains. Pyridoxal 5'-phosphate serves as cofactor.

The catalysed reaction is (1S,2R)-1-C-(indol-3-yl)glycerol 3-phosphate + L-serine = D-glyceraldehyde 3-phosphate + L-tryptophan + H2O. It functions in the pathway amino-acid biosynthesis; L-tryptophan biosynthesis; L-tryptophan from chorismate: step 5/5. Its function is as follows. The beta subunit is responsible for the synthesis of L-tryptophan from indole and L-serine. The sequence is that of Tryptophan synthase beta chain (trpB) from Cereibacter sphaeroides (strain ATCC 17023 / DSM 158 / JCM 6121 / CCUG 31486 / LMG 2827 / NBRC 12203 / NCIMB 8253 / ATH 2.4.1.) (Rhodobacter sphaeroides).